The sequence spans 132 residues: Fatty acid-binding protein, brain (132 aa).

Valine 2 is modified (N-acetylvaline). Residue arginine 127–tyrosine 129 coordinates a fatty acid.

This sequence belongs to the calycin superfamily. Fatty-acid binding protein (FABP) family. In terms of assembly, monomer.

The protein resides in the cytoplasm. Functionally, FABPs are thought to play a role in the intracellular transport of long-chain fatty acids and their acyl-CoA esters. Binds oleic and palmitic acids but not palmitoyl CoA. This chain is Fatty acid-binding protein, brain (FABP7), found in Bos taurus (Bovine).